Reading from the N-terminus, the 153-residue chain is Mitochondrial fission 1 protein (153 aa).

The Cytoplasmic segment spans residues 1-124; that stretch reads MTQLPYAVDA…LIDDKVTKEG (124 aa). The stretch at 73-106 is one TPR repeat; it reads RECLYYLALGNYKLGNYAQARKYNDALLENEPAN. A helical transmembrane segment spans residues 125 to 145; sequence LMGVAIISGVAVAAGVIGGVL. At 146-153 the chain is on the mitochondrial intermembrane side; sequence LRNLGRKR.

It belongs to the FIS1 family.

The protein resides in the mitochondrion outer membrane. In terms of biological role, has a role in mitochondrial fission. Has a role in outer membrane fission but not matrix separation. In Neurospora crassa (strain ATCC 24698 / 74-OR23-1A / CBS 708.71 / DSM 1257 / FGSC 987), this protein is Mitochondrial fission 1 protein (mtp-2).